The chain runs to 423 residues: UDP-N-acetylglucosamine 1-carboxyvinyltransferase 1 (423 aa).

23–24 lines the phosphoenolpyruvate pocket; sequence KN. Residue R96 participates in UDP-N-acetyl-alpha-D-glucosamine binding. The active-site Proton donor is the C120. 2-(S-cysteinyl)pyruvic acid O-phosphothioketal is present on C120. Positions 309 and 331 each coordinate UDP-N-acetyl-alpha-D-glucosamine.

It belongs to the EPSP synthase family. MurA subfamily.

It localises to the cytoplasm. It catalyses the reaction phosphoenolpyruvate + UDP-N-acetyl-alpha-D-glucosamine = UDP-N-acetyl-3-O-(1-carboxyvinyl)-alpha-D-glucosamine + phosphate. Its pathway is cell wall biogenesis; peptidoglycan biosynthesis. Its function is as follows. Cell wall formation. Adds enolpyruvyl to UDP-N-acetylglucosamine. This is UDP-N-acetylglucosamine 1-carboxyvinyltransferase 1 from Streptococcus pyogenes serotype M1.